A 96-amino-acid polypeptide reads, in one-letter code: MLCSIYKSSKKEGTYLYIPKKDDFSQVPDALMQMFGKPSFVMVIKMDGRKLAQVNIDKVRESLNTDGFFLQVPPPPVNELELHKERKAQQNVQDEE.

In terms of domain architecture, YcgL spans 1-84 (MLCSIYKSSK…PPVNELELHK (84 aa)).

In Vibrio atlanticus (strain LGP32) (Vibrio splendidus (strain Mel32)), this protein is YcgL domain-containing protein VS_0884.